A 307-amino-acid chain; its full sequence is Atrochrysone carboxyl ACP thioesterase (307 aa).

Residues histidine 104, histidine 106, aspartate 108, and histidine 109 each contribute to the Zn(2+) site. Aspartate 108 acts as the Proton donor/acceptor in catalysis.

This sequence belongs to the metallo-beta-lactamase superfamily. The cofactor is Zn(2+).

The catalysed reaction is atrochrysone carboxyl-[ACP] + H2O = atrochrysone carboxylate + holo-[ACP] + H(+). It participates in secondary metabolite biosynthesis. Its function is as follows. Atrochrysone carboxyl ACP thioesterase; part of the gene cluster that mediates the biosynthesis of monodictyphenone, a prenyl xanthone derivative. The pathway begins with the synthesis of atrochrysone thioester by the polyketide synthase (PKS) mdpG. The atrochrysone carboxyl ACP thioesterase mdpF then breaks the thioester bond and releases the atrochrysone carboxylic acid from mdpG. The atrochrysone carboxylic acid is then converted to atrochrysone which is further transformed into emodin anthrone. The next step is performed by the anthrone oxygenase mdpH that catalyzes the oxidation of emodinanthrone to emodin. Emodin is further modified to yield monodictyphenone via several steps involving mdpB, mdpC mdpJ, mdpK and mdpL. The short chain dehydrogenase mdpC converts the tautomers of emodin hydroquinone into the 3-hydroxy-3,4-dihydroan-thracen-1(2H)-one derivative. These enzymes with xptA, xptB and xptC are also proposed to be involved in the synthesis of shamixanthone from emodin. Especially, direct reduction of emodin by the short chain dehydrogenase mdpC followed by dehydration catalyzed by the scytalone dehydratase-like protein mdpB gives loss of oxygen and formation of chrysophanol intermediate in two simple steps. This Emericella nidulans (strain FGSC A4 / ATCC 38163 / CBS 112.46 / NRRL 194 / M139) (Aspergillus nidulans) protein is Atrochrysone carboxyl ACP thioesterase.